The primary structure comprises 194 residues: dTTP/UTP pyrophosphatase (194 aa).

Asp-76 serves as the catalytic Proton acceptor.

The protein belongs to the Maf family. YhdE subfamily. It depends on a divalent metal cation as a cofactor.

The protein resides in the cytoplasm. It catalyses the reaction dTTP + H2O = dTMP + diphosphate + H(+). It carries out the reaction UTP + H2O = UMP + diphosphate + H(+). Its function is as follows. Nucleoside triphosphate pyrophosphatase that hydrolyzes dTTP and UTP. May have a dual role in cell division arrest and in preventing the incorporation of modified nucleotides into cellular nucleic acids. This Shewanella oneidensis (strain ATCC 700550 / JCM 31522 / CIP 106686 / LMG 19005 / NCIMB 14063 / MR-1) protein is dTTP/UTP pyrophosphatase.